The chain runs to 207 residues: Probable nicotinate-nucleotide adenylyltransferase (207 aa).

This sequence belongs to the NadD family.

The enzyme catalyses nicotinate beta-D-ribonucleotide + ATP + H(+) = deamido-NAD(+) + diphosphate. Its pathway is cofactor biosynthesis; NAD(+) biosynthesis; deamido-NAD(+) from nicotinate D-ribonucleotide: step 1/1. In terms of biological role, catalyzes the reversible adenylation of nicotinate mononucleotide (NaMN) to nicotinic acid adenine dinucleotide (NaAD). In Desulfitobacterium hafniense (strain Y51), this protein is Probable nicotinate-nucleotide adenylyltransferase.